Here is a 96-residue protein sequence, read N- to C-terminus: Small ribosomal subunit protein bS6 (96 aa).

It belongs to the bacterial ribosomal protein bS6 family.

Functionally, binds together with bS18 to 16S ribosomal RNA. The sequence is that of Small ribosomal subunit protein bS6 from Streptococcus equi subsp. equi (strain 4047).